Reading from the N-terminus, the 163-residue chain is Ribosome maturation factor RimM (163 aa).

One can recognise a PRC barrel domain in the interval Ala-94 to Ile-162.

This sequence belongs to the RimM family. In terms of assembly, binds ribosomal protein uS19.

It localises to the cytoplasm. Its function is as follows. An accessory protein needed during the final step in the assembly of 30S ribosomal subunit, possibly for assembly of the head region. Essential for efficient processing of 16S rRNA. May be needed both before and after RbfA during the maturation of 16S rRNA. It has affinity for free ribosomal 30S subunits but not for 70S ribosomes. The chain is Ribosome maturation factor RimM from Zymomonas mobilis subsp. mobilis (strain ATCC 31821 / ZM4 / CP4).